Reading from the N-terminus, the 129-residue chain is Protein PerB (129 aa).

Its function is as follows. Positive regulatory protein of bfpA, the gene coding for the bundle-forming pilus of EPEC. The protein is Protein PerB (perB) of Escherichia coli O111:H-.